Reading from the N-terminus, the 710-residue chain is Polyribonucleotide nucleotidyltransferase (710 aa).

The Mg(2+) site is built by Asp489 and Asp495. The 60-residue stretch at 556–615 (PKIDTIKIDVDKIKVVIGKGGETIDKIIAETGVKIDIDDEGNVSIYSSDQAAIDRTKEII) folds into the KH domain. The region spanning 625 to 693 (GEVYHAKVIR…EKGRVDASMK (69 aa)) is the S1 motif domain.

Belongs to the polyribonucleotide nucleotidyltransferase family. Requires Mg(2+) as cofactor.

It localises to the cytoplasm. It catalyses the reaction RNA(n+1) + phosphate = RNA(n) + a ribonucleoside 5'-diphosphate. Involved in mRNA degradation. Catalyzes the phosphorolysis of single-stranded polyribonucleotides processively in the 3'- to 5'-direction. The sequence is that of Polyribonucleotide nucleotidyltransferase from Streptococcus pyogenes serotype M3 (strain ATCC BAA-595 / MGAS315).